A 61-amino-acid chain; its full sequence is Large ribosomal subunit protein bL28 (61 aa).

It belongs to the bacterial ribosomal protein bL28 family.

The chain is Large ribosomal subunit protein bL28 from Lacticaseibacillus paracasei (strain ATCC 334 / BCRC 17002 / CCUG 31169 / CIP 107868 / KCTC 3260 / NRRL B-441) (Lactobacillus paracasei).